Consider the following 447-residue polypeptide: Cobyrinate a,c-diamide synthase (447 aa).

Residues 252–439 (KIAVAFDESF…AHQHCIGNPY (188 aa)) form the GATase cobBQ-type domain. The active-site Nucleophile is C331.

This sequence belongs to the CobB/CbiA family. It depends on Mg(2+) as a cofactor.

It carries out the reaction cob(II)yrinate + 2 L-glutamine + 2 ATP + 2 H2O = cob(II)yrinate a,c diamide + 2 L-glutamate + 2 ADP + 2 phosphate + 2 H(+). The enzyme catalyses Ni-sirohydrochlorin + 2 L-glutamine + 2 ATP + 2 H2O = Ni-sirohydrochlorin a,c-diamide + 2 L-glutamate + 2 ADP + 2 phosphate + 2 H(+). It participates in cofactor biosynthesis; adenosylcobalamin biosynthesis; cob(II)yrinate a,c-diamide from sirohydrochlorin (anaerobic route): step 10/10. Functionally, catalyzes the ATP-dependent amidation of the two carboxylate groups at positions a and c of cobyrinate, using either L-glutamine or ammonia as the nitrogen source. Involved in the biosynthesis of the unique nickel-containing tetrapyrrole coenzyme F430, the prosthetic group of methyl-coenzyme M reductase (MCR), which plays a key role in methanogenesis and anaerobic methane oxidation. Catalyzes the ATP-dependent amidation of the two carboxylate groups at positions a and c of Ni-sirohydrochlorin, using L-glutamine or ammonia as the nitrogen source. The chain is Cobyrinate a,c-diamide synthase from Methanococcus maripaludis (strain C5 / ATCC BAA-1333).